The chain runs to 447 residues: Rab GDP dissociation inhibitor alpha (447 aa).

Serine 427 carries the post-translational modification Phosphoserine.

Belongs to the Rab GDI family. In terms of assembly, interacts with RHOH. Interacts with the non-phosphorylated forms of RAB1A, RAB3A, RAB5A, RAB5B, RAB5C, RAB8A, RAB8B, RAB12, RAB35, and RAB43. Interacts with RAB10. As to expression, high expression in brain, lower in other tissues.

The protein localises to the cytoplasm. Its subcellular location is the golgi apparatus. It localises to the trans-Golgi network. In terms of biological role, regulates the GDP/GTP exchange reaction of most Rab proteins by inhibiting the dissociation of GDP from them, and the subsequent binding of GTP to them. Promotes the dissociation of GDP-bound Rab proteins from the membrane and inhibits their activation. Promotes the dissociation of RAB1A, RAB3A, RAB5A and RAB10 from membranes. This Mus musculus (Mouse) protein is Rab GDP dissociation inhibitor alpha (Gdi1).